Consider the following 176-residue polypeptide: ATP-dependent protease subunit HslV (176 aa).

The active site involves threonine 5. Residues alanine 161, cysteine 164, and threonine 167 each contribute to the Na(+) site.

It belongs to the peptidase T1B family. HslV subfamily. In terms of assembly, a double ring-shaped homohexamer of HslV is capped on each side by a ring-shaped HslU homohexamer. The assembly of the HslU/HslV complex is dependent on binding of ATP.

The protein resides in the cytoplasm. It catalyses the reaction ATP-dependent cleavage of peptide bonds with broad specificity.. With respect to regulation, allosterically activated by HslU binding. In terms of biological role, protease subunit of a proteasome-like degradation complex believed to be a general protein degrading machinery. The polypeptide is ATP-dependent protease subunit HslV (Caldicellulosiruptor bescii (strain ATCC BAA-1888 / DSM 6725 / KCTC 15123 / Z-1320) (Anaerocellum thermophilum)).